Consider the following 122-residue polypeptide: Large ribosomal subunit protein uL14 (122 aa).

It belongs to the universal ribosomal protein uL14 family. In terms of assembly, part of the 50S ribosomal subunit. Forms a cluster with proteins L3 and L19. In the 70S ribosome, L14 and L19 interact and together make contacts with the 16S rRNA in bridges B5 and B8.

In terms of biological role, binds to 23S rRNA. Forms part of two intersubunit bridges in the 70S ribosome. The protein is Large ribosomal subunit protein uL14 of Methylobacterium sp. (strain 4-46).